Here is a 133-residue protein sequence, read N- to C-terminus: Large ribosomal subunit protein uL15 (133 aa).

The tract at residues 1-64 (MGLENLKPAK…QPLQRRLPKI (64 aa)) is disordered.

This sequence belongs to the universal ribosomal protein uL15 family. In terms of assembly, part of the 50S ribosomal subunit.

Binds to the 23S rRNA. This chain is Large ribosomal subunit protein uL15, found in Helicobacter pylori (strain J99 / ATCC 700824) (Campylobacter pylori J99).